The sequence spans 160 residues: Endoplasmic reticulum transmembrane protein 2 (160 aa).

The Lumenal portion of the chain corresponds to 1 to 2 (MG). Residues 3–23 (VYLAVLFSLLVIEMAILFILV) form a helical membrane-spanning segment. Residues 24–45 (LPLPQRMRRWLYIRYSIISTNK) are Cytoplasmic-facing. Residues 46–66 (KFRTYMVGIMIFVGLLFIDSW) traverse the membrane as a helical segment. At 67–103 (KRSQIRVSTYRNQKNPYIINSVTPVDALASRAYNQRN) the chain is on the lumenal side. Residues 104–124 (VYISGFIIYFYICILTVMSIL) form a helical membrane-spanning segment. The Cytoplasmic segment spans residues 125 to 160 (RRIVEWNDKMKAGDDILKEKLRRKQKYLEELQKKKF). The Di-lysine motif motif lies at 157-160 (KKKF).

This sequence belongs to the BCAP29/BCAP31 family.

The protein resides in the endoplasmic reticulum membrane. In terms of biological role, may play a role in anterograde transport of membrane proteins from the endoplasmic reticulum to the Golgi. The polypeptide is Endoplasmic reticulum transmembrane protein 2 (YET2) (Saccharomyces cerevisiae (strain ATCC 204508 / S288c) (Baker's yeast)).